The sequence spans 58 residues: Large ribosomal subunit protein eL24 (58 aa).

Zn(2+) contacts are provided by cysteine 6, cysteine 9, cysteine 32, and cysteine 36. The segment at 6-36 (CAFCGADILPGYGIMYVKTDGTTLRFCSRKC) adopts a C4-type zinc-finger fold.

Belongs to the eukaryotic ribosomal protein eL24 family. Part of the 50S ribosomal subunit. Forms a cluster with proteins L3 and L14. It depends on Zn(2+) as a cofactor.

In terms of biological role, binds to the 23S rRNA. The protein is Large ribosomal subunit protein eL24 of Pyrobaculum islandicum (strain DSM 4184 / JCM 9189 / GEO3).